We begin with the raw amino-acid sequence, 664 residues long: uncharacterized protein (664 aa).

The signal sequence occupies residues 1 to 35 (MGVSVLTFHVSLFLKRILSIAFFLLSLSTLLRIVN). N-linked (GlcNAc...) asparagine glycans are attached at residues Asn-101 and Asn-138. 2 Sel1-like repeats span residues 141 to 178 (AFANNMMGFFYSTSFSEYASNNPALARIHWELAAKQGS) and 179 to 214 (LDAHQFLAYHNLIALNMPQSDEEAVKHYKFISDHLF). Residues Asn-221, Asn-300, and Asn-371 are each glycosylated (N-linked (GlcNAc...) asparagine). Sel1-like repeat units follow at residues 337–372 (AQSCGYLGLLHLFDKGPLFDIDKAYWWFKRGATKND), 373–409 (SNSYYGLGYMAYHGLTSNGVDREKGMRLINLAVMNEN), 410–441 (PHALMFLGLIRLEEARYEEAYHLFLRAATQKS), and 442–477 (VISYKYLADCYYNGTGTSRSMISASLYYKKFVEAIR). Residues Asn-454 and Asn-537 are each glycosylated (N-linked (GlcNAc...) asparagine). 2 Sel1-like repeats span residues 564–599 (IDAIFKLGDYYYYGIGTPKDYSKAYTCYKIAYEQSS) and 601–636 (GMGLWNMAYMHEYGIGRDQDIYIARRLLDELSSNQN).

This sequence belongs to the sel-1 family.

This is an uncharacterized protein from Schizosaccharomyces pombe (strain 972 / ATCC 24843) (Fission yeast).